A 242-amino-acid polypeptide reads, in one-letter code: Small ribosomal subunit protein uS3 (242 aa).

One can recognise a KH type-2 domain in the interval 39–109 (IRQYVEKNLA…QIRINVIEVA (71 aa)). A disordered region spans residues 220–242 (VPAQAPRRQQRRRQQFEDRSSEG). Residues 233–242 (QQFEDRSSEG) are compositionally biased toward basic and acidic residues.

The protein belongs to the universal ribosomal protein uS3 family. In terms of assembly, part of the 30S ribosomal subunit. Forms a tight complex with proteins S10 and S14.

Its function is as follows. Binds the lower part of the 30S subunit head. Binds mRNA in the 70S ribosome, positioning it for translation. In Microcystis aeruginosa (strain NIES-843 / IAM M-2473), this protein is Small ribosomal subunit protein uS3.